Consider the following 134-residue polypeptide: Small ribosomal subunit protein uS8c (134 aa).

It belongs to the universal ribosomal protein uS8 family. Part of the 30S ribosomal subunit.

The protein localises to the plastid. In terms of biological role, one of the primary rRNA binding proteins, it binds directly to 16S rRNA central domain where it helps coordinate assembly of the platform of the 30S subunit. In Cuscuta reflexa (Southern Asian dodder), this protein is Small ribosomal subunit protein uS8c (rps8).